We begin with the raw amino-acid sequence, 145 residues long: Putative antiporter subunit mnhG2 (145 aa).

Transmembrane regions (helical) follow at residues 11 to 31, 51 to 71, and 72 to 92; these read IAAV…IGIV, VLLT…FFSV, and RLLL…HLVA.

This sequence belongs to the CPA3 antiporters (TC 2.A.63) subunit G family. In terms of assembly, may form a heterooligomeric complex that consists of seven subunits: mnhA2, mnhB2, mnhC2, mnhD2, mnhE2, mnhF2 and mnhG2.

It localises to the cell membrane. This Staphylococcus aureus (strain JH9) protein is Putative antiporter subunit mnhG2 (mnhG2).